The primary structure comprises 614 residues: Dihydroxy-acid dehydratase (614 aa).

Aspartate 81 contributes to the Mg(2+) binding site. Position 122 (cysteine 122) interacts with [2Fe-2S] cluster. Mg(2+) contacts are provided by aspartate 123 and lysine 124. At lysine 124 the chain carries N6-carboxylysine. [2Fe-2S] cluster is bound at residue cysteine 195. Glutamate 491 is a Mg(2+) binding site. The Proton acceptor role is filled by serine 517.

The protein belongs to the IlvD/Edd family. In terms of assembly, homodimer. [2Fe-2S] cluster serves as cofactor. Requires Mg(2+) as cofactor.

It carries out the reaction (2R)-2,3-dihydroxy-3-methylbutanoate = 3-methyl-2-oxobutanoate + H2O. The catalysed reaction is (2R,3R)-2,3-dihydroxy-3-methylpentanoate = (S)-3-methyl-2-oxopentanoate + H2O. It functions in the pathway amino-acid biosynthesis; L-isoleucine biosynthesis; L-isoleucine from 2-oxobutanoate: step 3/4. The protein operates within amino-acid biosynthesis; L-valine biosynthesis; L-valine from pyruvate: step 3/4. Functionally, functions in the biosynthesis of branched-chain amino acids. Catalyzes the dehydration of (2R,3R)-2,3-dihydroxy-3-methylpentanoate (2,3-dihydroxy-3-methylvalerate) into 2-oxo-3-methylpentanoate (2-oxo-3-methylvalerate) and of (2R)-2,3-dihydroxy-3-methylbutanoate (2,3-dihydroxyisovalerate) into 2-oxo-3-methylbutanoate (2-oxoisovalerate), the penultimate precursor to L-isoleucine and L-valine, respectively. This chain is Dihydroxy-acid dehydratase, found in Rhodopseudomonas palustris (strain BisA53).